A 79-amino-acid polypeptide reads, in one-letter code: ATP synthase subunit c (79 aa).

2 consecutive transmembrane segments (helical) span residues 11–31 and 53–73; these read MAAA…IGIL and FFIV…LGLY.

The protein belongs to the ATPase C chain family. F-type ATPases have 2 components, F(1) - the catalytic core - and F(0) - the membrane proton channel. F(1) has five subunits: alpha(3), beta(3), gamma(1), delta(1), epsilon(1). F(0) has three main subunits: a(1), b(2) and c(10-14). The alpha and beta chains form an alternating ring which encloses part of the gamma chain. F(1) is attached to F(0) by a central stalk formed by the gamma and epsilon chains, while a peripheral stalk is formed by the delta and b chains.

It is found in the cell inner membrane. Its function is as follows. F(1)F(0) ATP synthase produces ATP from ADP in the presence of a proton or sodium gradient. F-type ATPases consist of two structural domains, F(1) containing the extramembraneous catalytic core and F(0) containing the membrane proton channel, linked together by a central stalk and a peripheral stalk. During catalysis, ATP synthesis in the catalytic domain of F(1) is coupled via a rotary mechanism of the central stalk subunits to proton translocation. Functionally, key component of the F(0) channel; it plays a direct role in translocation across the membrane. A homomeric c-ring of between 10-14 subunits forms the central stalk rotor element with the F(1) delta and epsilon subunits. In Pectobacterium atrosepticum (strain SCRI 1043 / ATCC BAA-672) (Erwinia carotovora subsp. atroseptica), this protein is ATP synthase subunit c.